Consider the following 275-residue polypeptide: Phosphonoacetaldehyde hydrolase (275 aa).

Residue aspartate 15 is the Nucleophile of the active site. Residues aspartate 15 and alanine 17 each coordinate Mg(2+). The Schiff-base intermediate with substrate role is filled by lysine 56. Aspartate 189 is a binding site for Mg(2+).

Belongs to the HAD-like hydrolase superfamily. PhnX family. As to quaternary structure, homodimer. It depends on Mg(2+) as a cofactor.

It catalyses the reaction phosphonoacetaldehyde + H2O = acetaldehyde + phosphate + H(+). Involved in phosphonate degradation. This Pseudomonas putida (Arthrobacter siderocapsulatus) protein is Phosphonoacetaldehyde hydrolase.